The sequence spans 110 residues: MRQVTIPLIQSKSMFCVIYRSSKRDQTYLYVEKKDDFSRVPEALMKGFGQPQLAMMLPLDGRKKLVNAELEKVKQALSEQGYYLQLPPPPEDLLKQHLSSVGQNTSPADR.

The YcgL domain occupies 14 to 98 (MFCVIYRSSK…PPEDLLKQHL (85 aa)). The interval 87–110 (PPPPEDLLKQHLSSVGQNTSPADR) is disordered. Positions 97–110 (HLSSVGQNTSPADR) are enriched in polar residues.

The sequence is that of Protein YcgL from Salmonella choleraesuis (strain SC-B67).